Reading from the N-terminus, the 304-residue chain is HTH-type transcriptional activator CmpR (304 aa).

An HTH lysR-type domain is found at 1–61; that stretch reads MKNATLHQFE…EQIGRKIYLT (61 aa). A DNA-binding region (H-T-H motif) is located at residues 21–40; sequence FTKAAEELFLTQPTVSQQMK.

It belongs to the LysR transcriptional regulatory family.

It is found in the cytoplasm. In terms of biological role, activates transcription of the cmpABCD operon under carbon dioxide-limited conditions. Specifically binds to the cmpR-cmpA intergenic region. This chain is HTH-type transcriptional activator CmpR (cmpR), found in Synechocystis sp. (strain ATCC 27184 / PCC 6803 / Kazusa).